The sequence spans 274 residues: uncharacterized protein (274 aa).

The protein belongs to the type II cytokine receptor family.

This is an uncharacterized protein from Sus scrofa (Pig).